Reading from the N-terminus, the 187-residue chain is dTTP/UTP pyrophosphatase (187 aa).

The active-site Proton acceptor is aspartate 72.

Belongs to the Maf family. YhdE subfamily. A divalent metal cation serves as cofactor.

Its subcellular location is the cytoplasm. It carries out the reaction dTTP + H2O = dTMP + diphosphate + H(+). The enzyme catalyses UTP + H2O = UMP + diphosphate + H(+). Functionally, nucleoside triphosphate pyrophosphatase that hydrolyzes dTTP and UTP. May have a dual role in cell division arrest and in preventing the incorporation of modified nucleotides into cellular nucleic acids. This is dTTP/UTP pyrophosphatase from Vibrio cholerae serotype O1 (strain ATCC 39315 / El Tor Inaba N16961).